A 68-amino-acid chain; its full sequence is uncharacterized protein (68 aa).

The disordered stretch occupies residues 1–68 (METIIRRFSP…GNSKNIKTKK (68 aa)). Positions 9 to 34 (SPKEKEKEKEKEEKDEKSKDKKEPIK) are enriched in basic and acidic residues. Residues 42 to 51 (DEEEEEDEQE) show a composition bias toward acidic residues.

This is an uncharacterized protein from Dictyostelium discoideum (Social amoeba).